The chain runs to 35 residues: Photosystem II reaction center protein M (35 aa).

The helical transmembrane segment at 5-25 threads the bilayer; it reads ILGLIATALFILIPTSFLIIL.

It belongs to the PsbM family. In terms of assembly, PSII is composed of 1 copy each of membrane proteins PsbA, PsbB, PsbC, PsbD, PsbE, PsbF, PsbH, PsbI, PsbJ, PsbK, PsbL, PsbM, PsbT, PsbX, PsbY, PsbZ, Psb30/Ycf12, at least 3 peripheral proteins of the oxygen-evolving complex and a large number of cofactors. It forms dimeric complexes.

The protein localises to the plastid. It localises to the chloroplast thylakoid membrane. One of the components of the core complex of photosystem II (PSII). PSII is a light-driven water:plastoquinone oxidoreductase that uses light energy to abstract electrons from H(2)O, generating O(2) and a proton gradient subsequently used for ATP formation. It consists of a core antenna complex that captures photons, and an electron transfer chain that converts photonic excitation into a charge separation. This subunit is found at the monomer-monomer interface. The polypeptide is Photosystem II reaction center protein M (Oltmannsiellopsis viridis (Marine flagellate)).